The chain runs to 628 residues: 1-deoxy-D-xylulose-5-phosphate synthase (628 aa).

Residues histidine 72 and 113–115 (GHS) each bind thiamine diphosphate. Residue aspartate 144 participates in Mg(2+) binding. Thiamine diphosphate-binding positions include 145-146 (GA), asparagine 173, tyrosine 284, and glutamate 366. Asparagine 173 is a binding site for Mg(2+).

It belongs to the transketolase family. DXPS subfamily. In terms of assembly, homodimer. The cofactor is Mg(2+). Thiamine diphosphate is required as a cofactor.

The enzyme catalyses D-glyceraldehyde 3-phosphate + pyruvate + H(+) = 1-deoxy-D-xylulose 5-phosphate + CO2. The protein operates within metabolic intermediate biosynthesis; 1-deoxy-D-xylulose 5-phosphate biosynthesis; 1-deoxy-D-xylulose 5-phosphate from D-glyceraldehyde 3-phosphate and pyruvate: step 1/1. Functionally, catalyzes the acyloin condensation reaction between C atoms 2 and 3 of pyruvate and glyceraldehyde 3-phosphate to yield 1-deoxy-D-xylulose-5-phosphate (DXP). The protein is 1-deoxy-D-xylulose-5-phosphate synthase of Shouchella clausii (strain KSM-K16) (Alkalihalobacillus clausii).